Reading from the N-terminus, the 379-residue chain is Armadillo repeat-containing X-linked protein 3 (379 aa).

Residues 1 to 6 (MGYARK) lie on the Mitochondrial intermembrane side of the membrane. 2 mitochondrion outer membrane (MOM)-targeting sequence regions span residues 1 to 6 (MGYARK) and 26 to 37 (RLTRGRKQNKEK). A helical; Signal-anchor membrane pass occupies residues 7 to 29 (VGWVTAGLVIGAGACYCIYRLTR). Over 30 to 379 (GRKQNKEKMA…AEHMFPKSQE (350 aa)) the chain is Cytoplasmic. Phosphoserine is present on residues Ser-61, Ser-67, and Ser-72. Positions 89–98 (RARARARARA) are nuclear localization signal. The segment covering 95 to 106 (RARATRARRAVQ) has biased composition (basic residues). The tract at residues 95–116 (RARATRARRAVQKRASPNSDDT) is disordered. Phosphoserine is present on Ser-110. ARM repeat units lie at residues 111–151 (PNSD…NNAA), 153–192 (AFNR…NLSV), and 233–272 (VTNE…NLAE).

It belongs to the eutherian X-chromosome-specific Armcx family. Interacts (via ARM domain) with MIRO1, MIRO2 and TRAK2. The interaction with Miro is calcium-dependent. Interacts with SOX10.

It localises to the mitochondrion outer membrane. The protein localises to the cytoplasm. It is found in the nucleus. In terms of biological role, regulates mitochondrial aggregation and transport in axons in living neurons. May link mitochondria to the TRAK2-kinesin motor complex via its interaction with Miro and TRAK2. Mitochondrial distribution and dynamics is regulated through ARMCX3 protein degradation, which is promoted by PCK and negatively regulated by WNT1. Enhances the SOX10-mediated transactivation of the neuronal acetylcholine receptor subunit alpha-3 and beta-4 subunit gene promoters. This Homo sapiens (Human) protein is Armadillo repeat-containing X-linked protein 3 (ARMCX3).